A 266-amino-acid polypeptide reads, in one-letter code: GTP cyclohydrolase III (266 aa).

It belongs to the archaeal-type GTP cyclohydrolase family.

The catalysed reaction is GTP + 3 H2O = 2-amino-5-formylamino-6-(5-phospho-D-ribosylamino)pyrimidin-4(3H)-one + 2 phosphate + 2 H(+). Functionally, catalyzes the formation of 2-amino-5-formylamino-6-ribofuranosylamino-4(3H)-pyrimidinone ribonucleotide monophosphate and inorganic phosphate from GTP. Also has an independent pyrophosphate phosphohydrolase activity. The sequence is that of GTP cyclohydrolase III from Methanococcus vannielii (strain ATCC 35089 / DSM 1224 / JCM 13029 / OCM 148 / SB).